Consider the following 637-residue polypeptide: CREB-regulated transcription coactivator 3 (637 aa).

Position 66 is a phosphoserine (Ser66). A compositionally biased stretch (basic residues) spans 105 to 115; it reads NRLHSSHHRPI. 2 disordered regions span residues 105 to 184 and 269 to 288; these read NRLH…SLQD and HFPS…YANI. Position 133 is a phosphoserine (Ser133). The residue at position 143 (Thr143) is a Phosphothreonine. At Ser145 the chain carries Phosphoserine; by SIK2. The span at 145–159 shows a compositional bias: polar residues; it reads SDSALHTSASSTKSQ. Position 151 is a phosphothreonine (Thr151). Ser293 is subject to Phosphoserine. The interval 299–462 is disordered; the sequence is AMTHLGISGS…QNYQPPSPVP (164 aa). The span at 309–337 shows a compositional bias: polar residues; that stretch reads PGMQNTRSNPSIQATMNNNSLASNVNSHT. A compositionally biased stretch (low complexity) spans 344 to 365; that stretch reads PALHPSLRLSSLSNPSLPTSAL. Residues Ser377 and Ser396 each carry the phosphoserine modification. Residues 377-395 show a composition bias toward polar residues; the sequence is SPLTLTPGSESNRSISNQF. Residues 396-407 are compositionally biased toward low complexity; the sequence is SPTSPMNMPPNS. A compositionally biased stretch (pro residues) spans 418–429; sequence SLPPLEPPPPYP. The span at 430–447 shows a compositional bias: low complexity; sequence LYSDQPQPHLHHTQQQMH. Ser561 carries the phosphoserine modification. Residues 615-637 form a disordered region; it reads MLSDPDMVLPDPSIEDSFRSDKL.

Belongs to the TORC family. As to quaternary structure, binding, as a tetramer, through its N-terminal region, with the bZIP domain of creb1 enhances recruitment of taf4 to the promoter. 'Arg-300' in the bZIP domain of creb1 is essential for this interaction.

Its subcellular location is the nucleus. The protein resides in the cytoplasm. In terms of biological role, transcriptional coactivator for creb1 which activates transcription through both consensus and variant cAMP response element (CRE) sites. Acts as a coactivator, in the SIK/TORC signaling pathway, being active when dephosphorylated and acts independently of creb1 'Ser-119' phosphorylation. Enhances the interaction of creb1 with taf4. Regulates the expression of specific CREB-activated genes such as the steroidogenic gene, StAR. Potent coactivator of ppargc1a and inducer of mitochondrial biogenesis in muscle cells. This is CREB-regulated transcription coactivator 3 (crtc3) from Xenopus tropicalis (Western clawed frog).